The primary structure comprises 130 residues: Sec-independent protein translocase protein TatB (130 aa).

The helical transmembrane segment at 1-21 (MFDIGFTELTLIFIIGLVVLG) threads the bilayer. Basic and acidic residues-rich tracts occupy residues 57 to 67 (QDMQERMEKQM) and 111 to 130 (PSDKDSADKNNHDQDSRRHD). Positions 57 to 130 (QDMQERMEKQ…NHDQDSRRHD (74 aa)) are disordered.

This sequence belongs to the TatB family. As to quaternary structure, the Tat system comprises two distinct complexes: a TatABC complex, containing multiple copies of TatA, TatB and TatC subunits, and a separate TatA complex, containing only TatA subunits. Substrates initially bind to the TatABC complex, which probably triggers association of the separate TatA complex to form the active translocon.

It is found in the cell inner membrane. Its function is as follows. Part of the twin-arginine translocation (Tat) system that transports large folded proteins containing a characteristic twin-arginine motif in their signal peptide across membranes. Together with TatC, TatB is part of a receptor directly interacting with Tat signal peptides. TatB may form an oligomeric binding site that transiently accommodates folded Tat precursor proteins before their translocation. This Alcanivorax borkumensis (strain ATCC 700651 / DSM 11573 / NCIMB 13689 / SK2) protein is Sec-independent protein translocase protein TatB.